A 164-amino-acid polypeptide reads, in one-letter code: Endoribonuclease YbeY (164 aa).

Positions 125, 129, and 135 each coordinate Zn(2+).

Belongs to the endoribonuclease YbeY family. The cofactor is Zn(2+).

It is found in the cytoplasm. Single strand-specific metallo-endoribonuclease involved in late-stage 70S ribosome quality control and in maturation of the 3' terminus of the 16S rRNA. The protein is Endoribonuclease YbeY of Paramagnetospirillum magneticum (strain ATCC 700264 / AMB-1) (Magnetospirillum magneticum).